The chain runs to 489 residues: Rhamnulokinase (489 aa).

13-17 is a binding site for ATP; it reads ASSGR. Cys68 and Cys222 are joined by a disulfide. Substrate contacts are provided by residues Gly83 and 236-238; that span reads HDT. The active-site Proton acceptor is the Asp237. Thr259 lines the ATP pocket. Asn296 contributes to the substrate binding site. Position 304 (Gln304) interacts with ATP. Cys353 and Cys370 are joined by a disulfide. Residue Gly402 participates in ATP binding. A disulfide bond links Cys413 and Cys417.

It belongs to the rhamnulokinase family. As to quaternary structure, monomer. Mg(2+) is required as a cofactor.

The enzyme catalyses L-rhamnulose + ATP = L-rhamnulose 1-phosphate + ADP + H(+). It functions in the pathway carbohydrate degradation; L-rhamnose degradation; glycerone phosphate from L-rhamnose: step 2/3. In terms of biological role, involved in the catabolism of L-rhamnose (6-deoxy-L-mannose). Catalyzes the transfer of the gamma-phosphate group from ATP to the 1-hydroxyl group of L-rhamnulose to yield L-rhamnulose 1-phosphate. This Escherichia coli (strain K12 / DH10B) protein is Rhamnulokinase.